The chain runs to 68 residues: UPF0435 protein SA1696 (68 aa).

The protein belongs to the UPF0435 family.

This is UPF0435 protein SA1696 from Staphylococcus aureus (strain N315).